We begin with the raw amino-acid sequence, 24 residues long: Brevinin-1Bc (24 aa).

Cysteines 18 and 24 form a disulfide.

In terms of tissue distribution, expressed by the skin glands.

It localises to the secreted. Its function is as follows. Antibacterial activity against Gram-positive bacterium S.aureus. In Lithobates berlandieri (Rio Grande leopard frog), this protein is Brevinin-1Bc.